Consider the following 400-residue polypeptide: Aspartate aminotransferase (400 aa).

Glycine 42 and asparagine 180 together coordinate L-aspartate. Lysine 241 carries the N6-(pyridoxal phosphate)lysine modification. Arginine 373 serves as a coordination point for L-aspartate.

This sequence belongs to the class-I pyridoxal-phosphate-dependent aminotransferase family. In terms of assembly, homodimer. Pyridoxal 5'-phosphate serves as cofactor.

The protein resides in the cytoplasm. It carries out the reaction L-aspartate + 2-oxoglutarate = oxaloacetate + L-glutamate. The protein is Aspartate aminotransferase (aspC) of Sulfolobus acidocaldarius (strain ATCC 33909 / DSM 639 / JCM 8929 / NBRC 15157 / NCIMB 11770).